The sequence spans 278 residues: Octanoyl-[GcvH]:protein N-octanoyltransferase (278 aa).

Positions 41–247 constitute a BPL/LPL catalytic domain; the sequence is DISDNVVRTW…AIKDLGGVLN (207 aa). The Acyl-thioester intermediate role is filled by Cys-146.

This sequence belongs to the octanoyltransferase LipL family.

It catalyses the reaction N(6)-octanoyl-L-lysyl-[glycine-cleavage complex H protein] + L-lysyl-[lipoyl-carrier protein] = N(6)-octanoyl-L-lysyl-[lipoyl-carrier protein] + L-lysyl-[glycine-cleavage complex H protein]. It participates in protein modification; protein lipoylation via endogenous pathway; protein N(6)-(lipoyl)lysine from octanoyl-[acyl-carrier-protein]. In terms of biological role, catalyzes the amidotransfer (transamidation) of the octanoyl moiety from octanoyl-GcvH to the lipoyl domain of the E2 subunit of lipoate-dependent enzymes. The sequence is that of Octanoyl-[GcvH]:protein N-octanoyltransferase from Staphylococcus aureus (strain NCTC 8325 / PS 47).